The following is a 196-amino-acid chain: Peptide deformylase (196 aa).

Cys103 and His145 together coordinate Fe cation. Residue Glu146 is part of the active site. Residue His149 participates in Fe cation binding.

The protein belongs to the polypeptide deformylase family. The cofactor is Fe(2+).

It carries out the reaction N-terminal N-formyl-L-methionyl-[peptide] + H2O = N-terminal L-methionyl-[peptide] + formate. Removes the formyl group from the N-terminal Met of newly synthesized proteins. Requires at least a dipeptide for an efficient rate of reaction. N-terminal L-methionine is a prerequisite for activity but the enzyme has broad specificity at other positions. The polypeptide is Peptide deformylase (Rhodococcus opacus (strain B4)).